The chain runs to 756 residues: Polyribonucleotide nucleotidyltransferase (756 aa).

2 residues coordinate Mg(2+): D492 and D498. The KH domain occupies 559-618 (PQHAEVFVNPDVIRIIIGPGGKNIKAITAATGASIDIEDSGKVSIFAPTYEAMEMAREMV). The 75-residue stretch at 628-702 (GKNYVGKVRK…SRKAVLLEEQ (75 aa)) folds into the S1 motif domain. Residues 703–756 (GVEWNPEDTARPSGPPRDRGDRGDRGGRGDRGGDRRGGDRGGRGGDRGRGGDRR) are disordered. Residues 718-756 (PRDRGDRGDRGGRGDRGGDRRGGDRGGRGGDRGRGGDRR) show a composition bias toward basic and acidic residues.

This sequence belongs to the polyribonucleotide nucleotidyltransferase family. Mg(2+) serves as cofactor.

The protein resides in the cytoplasm. The catalysed reaction is RNA(n+1) + phosphate = RNA(n) + a ribonucleoside 5'-diphosphate. In terms of biological role, involved in mRNA degradation. Catalyzes the phosphorolysis of single-stranded polyribonucleotides processively in the 3'- to 5'-direction. In Nitratidesulfovibrio vulgaris (strain DSM 19637 / Miyazaki F) (Desulfovibrio vulgaris), this protein is Polyribonucleotide nucleotidyltransferase.